Reading from the N-terminus, the 460-residue chain is Bifunctional protein GlmU (460 aa).

A pyrophosphorylase region spans residues 1 to 235 (MALSAAIVLA…PLTVEGVNDR (235 aa)). UDP-N-acetyl-alpha-D-glucosamine is bound by residues 9–12 (LAAG), Lys23, Gln76, and 81–82 (GT). Position 109 (Asp109) interacts with Mg(2+). Residues Gly146, Glu161, Asn176, and Asn233 each coordinate UDP-N-acetyl-alpha-D-glucosamine. Asn233 contributes to the Mg(2+) binding site. Positions 236 to 256 (VQLAALSKTYNRRVCERWMRD) are linker. Residues 257 to 460 (GVTILDPETT…VEGWKPAWER (204 aa)) are N-acetyltransferase. Residues Arg338 and Lys356 each contribute to the UDP-N-acetyl-alpha-D-glucosamine site. His368 functions as the Proton acceptor in the catalytic mechanism. Tyr371 and Asn382 together coordinate UDP-N-acetyl-alpha-D-glucosamine. Acetyl-CoA-binding positions include 391-392 (NY) and Ala428.

The protein in the N-terminal section; belongs to the N-acetylglucosamine-1-phosphate uridyltransferase family. This sequence in the C-terminal section; belongs to the transferase hexapeptide repeat family. Homotrimer. Requires Mg(2+) as cofactor.

It localises to the cytoplasm. The catalysed reaction is alpha-D-glucosamine 1-phosphate + acetyl-CoA = N-acetyl-alpha-D-glucosamine 1-phosphate + CoA + H(+). The enzyme catalyses N-acetyl-alpha-D-glucosamine 1-phosphate + UTP + H(+) = UDP-N-acetyl-alpha-D-glucosamine + diphosphate. It functions in the pathway nucleotide-sugar biosynthesis; UDP-N-acetyl-alpha-D-glucosamine biosynthesis; N-acetyl-alpha-D-glucosamine 1-phosphate from alpha-D-glucosamine 6-phosphate (route II): step 2/2. It participates in nucleotide-sugar biosynthesis; UDP-N-acetyl-alpha-D-glucosamine biosynthesis; UDP-N-acetyl-alpha-D-glucosamine from N-acetyl-alpha-D-glucosamine 1-phosphate: step 1/1. Its pathway is bacterial outer membrane biogenesis; LPS lipid A biosynthesis. Functionally, catalyzes the last two sequential reactions in the de novo biosynthetic pathway for UDP-N-acetylglucosamine (UDP-GlcNAc). The C-terminal domain catalyzes the transfer of acetyl group from acetyl coenzyme A to glucosamine-1-phosphate (GlcN-1-P) to produce N-acetylglucosamine-1-phosphate (GlcNAc-1-P), which is converted into UDP-GlcNAc by the transfer of uridine 5-monophosphate (from uridine 5-triphosphate), a reaction catalyzed by the N-terminal domain. This Bifidobacterium longum (strain NCC 2705) protein is Bifunctional protein GlmU.